Here is a 536-residue protein sequence, read N- to C-terminus: Keratin, type II cytoskeletal 4 (536 aa).

Positions 1 to 145 (MISRQSSVRG…DPEIQKIRTA (145 aa)) are head. Arginine 13 carries the post-translational modification Omega-N-methylarginine. Positions 146 to 181 (EREQIKTLNNKFASFIDKVRFLEQQNKVLETKWNLL) are coil 1A. The 312-residue stretch at 146–457 (EREQIKTLNN…KLLEGEECRM (312 aa)) folds into the IF rod domain. Residues 182–200 (QQQTTTTSPRNLDPFFETY) form a linker 1 region. The tract at residues 201 to 293 (INALRKNLDT…LYEAELSQMQ (93 aa)) is coil 1B. Residues 294-316 (THVSDTSVVLSMDNNRNLDLDGI) form a linker 12 region. A coil 2 region spans residues 317–454 (IAEVRAQYEE…TYRKLLEGEE (138 aa)). A tail region spans residues 455-524 (CRMSGECKSA…TSSATITKRS (70 aa)). The tract at residues 515 to 536 (TSSATITKRSPRTRQDPDGLQP) is disordered. Residues 527–536 (TRQDPDGLQP) show a composition bias toward basic and acidic residues.

This sequence belongs to the intermediate filament family. As to quaternary structure, heterotetramer of two type I and two type II keratins. keratin-4 is generally associated with keratin-13.

This Rattus norvegicus (Rat) protein is Keratin, type II cytoskeletal 4.